The chain runs to 193 residues: MNFLAHLHLAHLAESSLSGNLLADFVRGNPEESFPPDVVAGIHMHRRIDVLTDNLPEVREAREWFRNETRRVAPITLDVMWDHFLSRHWSQLSPDFPLQEFTCYAREQVMTILPDSPQRFINLNNYLWSEQWLVRYRDMDFIQSVLNGMASRRPRLDALRDSWYDLDAHYDALETRFWQFYPRMMEQASRKAL.

Belongs to the AcpH family.

It carries out the reaction holo-[ACP] + H2O = apo-[ACP] + (R)-4'-phosphopantetheine + H(+). Its function is as follows. Converts holo-ACP to apo-ACP by hydrolytic cleavage of the phosphopantetheine prosthetic group from ACP. This is Acyl carrier protein phosphodiesterase from Escherichia coli O6:H1 (strain CFT073 / ATCC 700928 / UPEC).